A 329-amino-acid polypeptide reads, in one-letter code: UDP-N-acetylenolpyruvoylglucosamine reductase (329 aa).

The region spanning 28 to 192 (RVGGPADLLC…ARVEVRLRPG (165 aa)) is the FAD-binding PCMH-type domain. Arg-172 is an active-site residue. The segment at 204 to 225 (DRERRRATQPLDRPTFGSTFTN) is disordered. The active-site Proton donor is Ser-221. Residue Glu-291 is part of the active site. Residues 303 to 329 (LAGLDGHAADGGGPGAASGGARPREAT) form a disordered region. Gly residues predominate over residues 311 to 320 (ADGGGPGAAS).

It belongs to the MurB family. It depends on FAD as a cofactor.

Its subcellular location is the cytoplasm. The catalysed reaction is UDP-N-acetyl-alpha-D-muramate + NADP(+) = UDP-N-acetyl-3-O-(1-carboxyvinyl)-alpha-D-glucosamine + NADPH + H(+). The protein operates within cell wall biogenesis; peptidoglycan biosynthesis. Functionally, cell wall formation. The sequence is that of UDP-N-acetylenolpyruvoylglucosamine reductase from Anaeromyxobacter dehalogenans (strain 2CP-C).